The sequence spans 450 residues: Neuronal acetylcholine receptor subunit alpha-10 (450 aa).

A signal peptide spans 1 to 24 (MGLRSHHLSLGLLLLFLLPAECLG). Residues 25–237 (AEGRLALKLF…FTLLLRRRAA (213 aa)) are Extracellular-facing. N-linked (GlcNAc...) asparagine glycosylation is found at asparagine 40 and asparagine 56. 2 disulfide bridges follow: cysteine 154–cysteine 168 and cysteine 218–cysteine 219. A run of 3 helical transmembrane segments spans residues 238-258 (AYVC…PLAF), 268-288 (VSLG…LAES), and 302-322 (YMAT…IMNL). Topologically, residues 323 to 428 (HYCGPSVRPV…WKRLARVMDR (106 aa)) are cytoplasmic. The tract at residues 355–380 (EPCGQSRPPELSPSPQSPEGGAGPPA) is disordered. The chain crosses the membrane as a helical span at residues 429-449 (FFLAIFFSMALVMSLLVLVQA).

This sequence belongs to the ligand-gated ion channel (TC 1.A.9) family. Acetylcholine receptor (TC 1.A.9.1) subfamily. Alpha-10/CHRNA10 sub-subfamily. In terms of assembly, forms homo- or heterooligomeric channels in conjunction with CHRNA10. The native outer hair cell receptor may be composed of CHRNA9:CHRNA10 heterooligomers. Found in the stoichiometric form (CHRNA9)2:(CHRNA10)3. Expressed in inner-ear tissue, tonsil, immortalized B-cells, cultured T-cells and peripheral blood lymphocytes.

It localises to the synaptic cell membrane. The protein localises to the cell membrane. The catalysed reaction is Ca(2+)(in) = Ca(2+)(out). The enzyme catalyses K(+)(in) = K(+)(out). It carries out the reaction Na(+)(in) = Na(+)(out). It catalyses the reaction Mg(2+)(in) = Mg(2+)(out). Activated by a myriad of ligands such as acetylcholine. AChR activity is inhibited by the antagonists alpha-conotoxins RgIA and GeXXA, small disulfide-constrained peptides from cone snails. Functionally, component of neuronal acetylcholine receptors (nAChRs) that function as pentameric, ligand-gated cation channels with high calcium permeability. nAChRs are excitatory neurotrasnmitter receptors formed by a collection of nAChR subunits. Each nAchR subunit confers differential attributes to channel properties, including activation, deactivation and desensitization kinetics, pH sensitivity, cation permeability, and binding to allosteric modulators. Forms heteropentamers with CHRNA9. Expressed in the inner ear, in sympathetic neurons and in other non-neuronal cells, such as skin keratinocytes and lymphocytes. nAChR formed by CHRNA9:CHRNA10 is involved in modulation of auditory stimuli. The channel is permeable to a range of divalent cations including calcium, the influx of which may activate a potassium current which hyperpolarizes the cell membrane. In the ear, mediates synaptic transmission between efferent olivocochlear fibers and hair cells of the cochlea, this may lead to a reduction in basilar membrane motion, altering the activity of auditory nerve fibers and reducing the range of dynamic hearing. This may protect against acoustic trauma. May also regulate keratinocyte adhesion. This is Neuronal acetylcholine receptor subunit alpha-10 from Homo sapiens (Human).